A 375-amino-acid polypeptide reads, in one-letter code: E3 ubiquitin-protein ligase RHF2A (375 aa).

Residues 33-74 (CSICLESFCESDPSTLTSCKHEYHLQCILEWCQRSSQCPMCW) form an RING-type; atypical zinc finger. The span at 146-159 (RARHGVRREGHRSR) shows a compositional bias: basic residues. Disordered stretches follow at residues 146–165 (RARH…SQGH), 172–262 (SSQP…SESL), and 318–375 (ERLE…SGSS). Residues 178 to 188 (SSPPPHPPMPS) are compositionally biased toward pro residues. Composition is skewed to polar residues over residues 211–245 (SHQS…SSPS) and 327–336 (RPSTASVSDV). Residues 337-365 (SENHTPETNNEHNRAAAGDEHSVNERGVK) show a composition bias toward basic and acidic residues.

The enzyme catalyses S-ubiquitinyl-[E2 ubiquitin-conjugating enzyme]-L-cysteine + [acceptor protein]-L-lysine = [E2 ubiquitin-conjugating enzyme]-L-cysteine + N(6)-ubiquitinyl-[acceptor protein]-L-lysine.. The protein operates within protein modification; protein ubiquitination. In terms of biological role, E3 ubiquitin-protein ligase involved in the positive regulation of the gametogenesis progression. Required for the degradation of KRP6, a cyclin-dependent kinase inhibitor which accumulates during meiosis and blocks the progression of subsequent mitoses during gametophytes development. Functions in association with RHF1A. In Arabidopsis thaliana (Mouse-ear cress), this protein is E3 ubiquitin-protein ligase RHF2A.